The following is a 265-amino-acid chain: Type III pantothenate kinase (265 aa).

17-24 (DIGNTSIS) is an ATP binding site. Substrate is bound at residue 114–117 (GSDV). The active-site Proton acceptor is the aspartate 116. Residue aspartate 137 coordinates K(+). Threonine 140 contributes to the ATP binding site. Position 192 (threonine 192) interacts with substrate.

It belongs to the type III pantothenate kinase family. In terms of assembly, homodimer. NH4(+) serves as cofactor. The cofactor is K(+).

The protein localises to the cytoplasm. The enzyme catalyses (R)-pantothenate + ATP = (R)-4'-phosphopantothenate + ADP + H(+). Its pathway is cofactor biosynthesis; coenzyme A biosynthesis; CoA from (R)-pantothenate: step 1/5. Its function is as follows. Catalyzes the phosphorylation of pantothenate (Pan), the first step in CoA biosynthesis. This chain is Type III pantothenate kinase, found in Borrelia hermsii (strain HS1 / DAH).